The following is a 702-amino-acid chain: Lipase maturation factor 2 (702 aa).

10 helical membrane passes run 10 to 30, 75 to 95, 102 to 122, 123 to 143, 164 to 184, 226 to 246, 259 to 279, 316 to 336, 363 to 383, and 396 to 416; these read LFLQ…YTQI, AQGL…ALLL, FIYL…QVFL, YFQW…VAPL, DLPF…SGVV, LSVV…FAPI, LLQI…LTLV, LMLE…YFGL, VTLP…LIAL, and FFAG…FLIS. The N-linked (GlcNAc...) asparagine glycan is linked to Asn488. The chain crosses the membrane as a helical span at residues 628–648; the sequence is QLSPLEPSILLWGLLGAVVAI. The segment at 660–702 is disordered; the sequence is LQSSKQTREEKRKQAPKKDSRAVSEQTAPNSNSNGSWAPRRKK. Basic and acidic residues predominate over residues 665 to 681; it reads QTREEKRKQAPKKDSRA. The segment covering 682 to 695 has biased composition (polar residues); it reads VSEQTAPNSNSNGS.

This sequence belongs to the lipase maturation factor family.

The protein localises to the endoplasmic reticulum membrane. Involved in the maturation of specific proteins in the endoplasmic reticulum. May be required for maturation and transport of active lipoprotein lipase (LPL) through the secretory pathway. This is Lipase maturation factor 2 (Lmf2) from Rattus norvegicus (Rat).